The primary structure comprises 283 residues: 4-diphosphocytidyl-2-C-methyl-D-erythritol kinase (283 aa).

Lysine 10 is a catalytic residue. 99-109 (PMGGGLGGGSS) contacts ATP. Residue aspartate 141 is part of the active site.

The protein belongs to the GHMP kinase family. IspE subfamily. Homodimer.

The catalysed reaction is 4-CDP-2-C-methyl-D-erythritol + ATP = 4-CDP-2-C-methyl-D-erythritol 2-phosphate + ADP + H(+). It participates in isoprenoid biosynthesis; isopentenyl diphosphate biosynthesis via DXP pathway; isopentenyl diphosphate from 1-deoxy-D-xylulose 5-phosphate: step 3/6. Its function is as follows. Catalyzes the phosphorylation of the position 2 hydroxy group of 4-diphosphocytidyl-2C-methyl-D-erythritol. The chain is 4-diphosphocytidyl-2-C-methyl-D-erythritol kinase from Shigella dysenteriae serotype 1 (strain Sd197).